The following is a 444-amino-acid chain: Light-independent protochlorophyllide reductase subunit N (444 aa).

[4Fe-4S] cluster contacts are provided by Cys36, Cys61, and Cys118.

It belongs to the BchN/ChlN family. In terms of assembly, protochlorophyllide reductase is composed of three subunits; BchL, BchN and BchB. Forms a heterotetramer of two BchB and two BchN subunits. Requires [4Fe-4S] cluster as cofactor.

It carries out the reaction chlorophyllide a + oxidized 2[4Fe-4S]-[ferredoxin] + 2 ADP + 2 phosphate = protochlorophyllide a + reduced 2[4Fe-4S]-[ferredoxin] + 2 ATP + 2 H2O. It functions in the pathway porphyrin-containing compound metabolism; bacteriochlorophyll biosynthesis (light-independent). Its function is as follows. Component of the dark-operative protochlorophyllide reductase (DPOR) that uses Mg-ATP and reduced ferredoxin to reduce ring D of protochlorophyllide (Pchlide) to form chlorophyllide a (Chlide). This reaction is light-independent. The NB-protein (BchN-BchB) is the catalytic component of the complex. The protein is Light-independent protochlorophyllide reductase subunit N of Chloroflexus aurantiacus (strain ATCC 29366 / DSM 635 / J-10-fl).